Here is a 115-residue protein sequence, read N- to C-terminus: NADH-ubiquinone oxidoreductase chain 3 (115 aa).

Transmembrane regions (helical) follow at residues L4 to L24, F55 to L75, and I84 to Y104.

Belongs to the complex I subunit 3 family. As to quaternary structure, core subunit of respiratory chain NADH dehydrogenase (Complex I) which is composed of 45 different subunits. Interacts with TMEM186. Interacts with TMEM242.

The protein localises to the mitochondrion membrane. It catalyses the reaction a ubiquinone + NADH + 5 H(+)(in) = a ubiquinol + NAD(+) + 4 H(+)(out). Its function is as follows. Core subunit of the mitochondrial membrane respiratory chain NADH dehydrogenase (Complex I) that is believed to belong to the minimal assembly required for catalysis. Complex I functions in the transfer of electrons from NADH to the respiratory chain. The immediate electron acceptor for the enzyme is believed to be ubiquinone. The protein is NADH-ubiquinone oxidoreductase chain 3 of Onychomys leucogaster (Northern grasshopper mouse).